Here is an 843-residue protein sequence, read N- to C-terminus: Protein P (843 aa).

Positions 1–177 (MPLSYPHFRK…FCGSPYSWEQ (177 aa)) are terminal protein domain (TP). The interval 178 to 346 (ELQHGSTSLN…YCLSHIINLL (169 aa)) is spacer. The interval 284-308 (EANPSLSTSKRHTSTGNAVELNPVP) is disordered. A polymerase/reverse transcriptase domain (RT) region spans residues 347–690 (EDWGPCYEHG…YMNLYPVARQ (344 aa)). The region spanning 357-600 (QHHIRTPRTP…YNLHFMGYVI (244 aa)) is the Reverse transcriptase domain. Asp-429, Asp-551, and Asp-552 together coordinate Mg(2+).

This sequence belongs to the hepadnaviridae P protein family.

It catalyses the reaction DNA(n) + a 2'-deoxyribonucleoside 5'-triphosphate = DNA(n+1) + diphosphate. It carries out the reaction Endonucleolytic cleavage to 5'-phosphomonoester.. Its activity is regulated as follows. Activated by host HSP70 and HSP40 in vitro to be able to bind the epsilon loop of the pgRNA. Because deletion of the RNase H region renders the protein partly chaperone-independent, the chaperones may be needed indirectly to relieve occlusion of the RNA-binding site by this domain. Inhibited by several reverse-transcriptase inhibitors: Lamivudine, Adefovir and Entecavir. In terms of biological role, multifunctional enzyme that converts the viral RNA genome into dsDNA in viral cytoplasmic capsids. This enzyme displays a DNA polymerase activity that can copy either DNA or RNA templates, and a ribonuclease H (RNase H) activity that cleaves the RNA strand of RNA-DNA heteroduplexes in a partially processive 3'- to 5'-endonucleasic mode. Neo-synthesized pregenomic RNA (pgRNA) are encapsidated together with the P protein, and reverse-transcribed inside the nucleocapsid. Initiation of reverse-transcription occurs first by binding the epsilon loop on the pgRNA genome, and is initiated by protein priming, thereby the 5'-end of (-)DNA is covalently linked to P protein. Partial (+)DNA is synthesized from the (-)DNA template and generates the relaxed circular DNA (RC-DNA) genome. After budding and infection, the RC-DNA migrates in the nucleus, and is converted into a plasmid-like covalently closed circular DNA (cccDNA). The activity of P protein does not seem to be necessary for cccDNA generation, and is presumably released from (+)DNA by host nuclear DNA repair machinery. This Homo sapiens (Human) protein is Protein P.